The following is a 521-amino-acid chain: Phomenoic acid biosynthesis cluster-specific transcriptional regulator (521 aa).

Residues 46–76 (HCWQCRRSCVVCDFTQPGCQRCSAAGVSCPG) constitute a DNA-binding region (zn(2)-C6 fungal-type).

The protein resides in the nucleus. Functionally, transcriptional regulator; part of the gene cluster that mediates the biosynthesis of phomenoic acid, a long chain aliphatic carboxylic acid that does not appear to be essential for pathogenicity but may play a role in allowing to outcompete other fungi in the environmental niche via its antifungal properties. Positively regulates the expression of the cluster and subsequent production of phomenoic acid. The sequence is that of Phomenoic acid biosynthesis cluster-specific transcriptional regulator from Leptosphaeria maculans (strain JN3 / isolate v23.1.3 / race Av1-4-5-6-7-8) (Blackleg fungus).